A 57-amino-acid polypeptide reads, in one-letter code: Protein translocase subunit SecE (57 aa).

A helical membrane pass occupies residues glycine 33–valine 53.

Belongs to the SecE/SEC61-gamma family. As to quaternary structure, component of the Sec protein translocase complex. Heterotrimer consisting of SecY (alpha), SecG (beta) and SecE (gamma) subunits. The heterotrimers can form oligomers, although 1 heterotrimer is thought to be able to translocate proteins. Interacts with the ribosome. May interact with SecDF, and other proteins may be involved.

It is found in the cell membrane. Its function is as follows. Essential subunit of the Sec protein translocation channel SecYEG. Clamps together the 2 halves of SecY. May contact the channel plug during translocation. The polypeptide is Protein translocase subunit SecE (Natronomonas pharaonis (strain ATCC 35678 / DSM 2160 / CIP 103997 / JCM 8858 / NBRC 14720 / NCIMB 2260 / Gabara) (Halobacterium pharaonis)).